Here is a 278-residue protein sequence, read N- to C-terminus: MTTILETKNLVYNYPDGTEALKGIDFKLEEGEMISLLGHNGAGKSTLFLHFNGIIEPTSGSVEIDGETLKYDKKSLLAARQKVGIVFQNPDDQLFAPTVLEDVAFGPMNMGLSEEEVKTRSMDALEKVGMSDYAEKPPHHLSGGQKKRVAIAGILSMKPKVMVLDEPTSGLDPNGASSIMQLLYDLNKEGMTIIISTHDVDLVPLYSDDIEVIVDGKIIKSGTCKEIFTDKEVIDEADLRLPWIGQLFEKLDKEHNITFGNGYPLTVSDAYDALLTKL.

An ABC transporter domain is found at 5–240 (LETKNLVYNY…KEVIDEADLR (236 aa)). 38–45 (GHNGAGKS) is an ATP binding site.

This sequence belongs to the ABC transporter superfamily. Energy-coupling factor EcfA family. As to quaternary structure, forms a stable energy-coupling factor (ECF) transporter complex composed of 2 membrane-embedded substrate-binding proteins (S component), 2 ATP-binding proteins (A component) and 2 transmembrane proteins (T component).

Its subcellular location is the cell membrane. Functionally, ATP-binding (A) component of a common energy-coupling factor (ECF) ABC-transporter complex. Unlike classic ABC transporters this ECF transporter provides the energy necessary to transport a number of different substrates. This chain is Energy-coupling factor transporter ATP-binding protein EcfA, found in Methanosphaera stadtmanae (strain ATCC 43021 / DSM 3091 / JCM 11832 / MCB-3).